The following is a 145-amino-acid chain: Transcription antitermination protein NusB (145 aa).

Belongs to the NusB family.

In terms of biological role, involved in transcription antitermination. Required for transcription of ribosomal RNA (rRNA) genes. Binds specifically to the boxA antiterminator sequence of the ribosomal RNA (rrn) operons. This Burkholderia cenocepacia (strain HI2424) protein is Transcription antitermination protein NusB.